A 78-amino-acid chain; its full sequence is Omega-conotoxin-like 2 (78 aa).

An N-terminal signal peptide occupies residues 1-22 (MKLTCVVIVAVLLLTACQLITA). The propeptide occupies 23 to 42 (DDSRGTQKHRSLRSTTKVSK). 3 disulfides stabilise this stretch: cysteine 46/cysteine 62, cysteine 53/cysteine 65, and cysteine 61/cysteine 72.

This sequence belongs to the conotoxin O1 superfamily. Expressed by the venom duct.

It localises to the secreted. Omega-conotoxins act at presynaptic membranes, they bind and block voltage-gated calcium channels (Cav). The chain is Omega-conotoxin-like 2 from Conus striatus (Striated cone).